Here is a 598-residue protein sequence, read N- to C-terminus: MENSSAASASSEAGSSRSQEIEELERFIDSYVLEYQVQGLLADKTEGDGESERTQSHISQWTADCSEPLDSSCSFSRGRAPPQQNGSKDNSLDMLGTDIWAANTFDSFSGATWDLQPEKLDFTQFHRKVRHTPKQPLPHIDREGCGKGKLEDGDGINLNDIEKVLPAWQGYHPMPHEVEIAHTKKLFRRRRNDRRRQQRPPGGNKPQQHGDHQPGSAKHNRDHQKSYQGGSAPHPSGRPTHHGYSQNRRWHHGNMKHPPGDKGEAGAHRNAKETMTIENPKLEDTAGDTGHSSLEAPRSPDTLAPVASERLPPQQSGGPEVETKRKDSILPERIGERPKITLLQSSKDRLRRRLKEKDEVAVETTTPQQNKMDKLIEILNSMRNNSSDVDTKLTTFMEEAQNSTNSEEMLGEIVRTIYQKAVSDRSFAFTAAKLCDKMALFMVEGTKFRSLLLNMLQKDFTVREELQQQDVERWLGFITFLCEVFGTMRSSTGEPFRVLVCPIYTCLRELLQSQDVKEDAVLCCSMELQSTGRLLEEQLPEMMTELLASARDKMLCPSESMLTRSLLLEVIELHANSWNPLTPPITQYYNRTIQKLTA.

At Met-1 the chain carries N-acetylmethionine. Positions 1-18 are enriched in low complexity; the sequence is MENSSAASASSEAGSSRS. 3 disordered regions span residues 1–20, 43–90, and 180–336; these read MENSSAASASSEAGSSRSQE, DKTE…SKDN, and IAHT…RIGE. Positions 1–305 are interaction with NCBP1/CBP80; that stretch reads MENSSAASAS…APRSPDTLAP (305 aa). Ser-18 is modified (phosphoserine). Positions 43–55 are enriched in basic and acidic residues; sequence DKTEGDGESERTQ. Polar residues predominate over residues 56 to 75; it reads SHISQWTADCSEPLDSSCSF. The segment covering 183 to 198 has biased composition (basic residues); that stretch reads TKKLFRRRRNDRRRQQ. Residues 258-272 show a composition bias toward basic and acidic residues; the sequence is PPGDKGEAGAHRNAK. A Phosphothreonine modification is found at Thr-289. Ser-299 is subject to Phosphoserine. Residues 321 to 336 show a composition bias toward basic and acidic residues; it reads VETKRKDSILPERIGE. The 202-residue stretch at 376 to 577 folds into the MIF4G domain; the sequence is IEILNSMRNN…LEVIELHANS (202 aa).

Belongs to the CTIF family. Interacts with NCBP1/CBP80; the interaction is direct. Associates with the eukaryotic translation initiation factor 3 (eIF-3) complex. In terms of tissue distribution, widely expressed.

The protein resides in the cytoplasm. It localises to the perinuclear region. Functionally, specifically required for the pioneer round of mRNA translation mediated by the cap-binding complex (CBC), that takes place during or right after mRNA export via the nuclear pore complex (NPC). Acts via its interaction with the NCBP1/CBP80 component of the CBC complex and recruits the 40S small subunit of the ribosome via eIF3. In contrast, it is not involved in steady state translation, that takes place when the CBC complex is replaced by cytoplasmic cap-binding protein eIF4E. Also required for nonsense-mediated mRNA decay (NMD), the pioneer round of mRNA translation mediated by the cap-binding complex playing a central role in nonsense-mediated mRNA decay (NMD). The sequence is that of CBP80/20-dependent translation initiation factor (CTIF) from Homo sapiens (Human).